Reading from the N-terminus, the 426-residue chain is uncharacterized protein (426 aa).

Solcar repeat units follow at residues 125-216, 226-315, and 334-422; these read KNNV…MKRV, HSPL…LKRT, and PNGL…CKKW. A run of 6 helical transmembrane segments spans residues 130–151, 193–213, 229–249, 290–310, 336–356, and 394–415; these read YFISGGIAGIVSRTCTAPLDRL, GINVLKVMPESSIKFGTYEAM, LYSYLAGGMAGSVAQMFIYPV, GVLVGILGMFPYSATDLGTFE, GLVMAFGALSGSTGATIVFPL, and LYKGLSPNLLKVAPSVAISYLV.

The protein belongs to the mitochondrial carrier (TC 2.A.29) family.

The protein localises to the mitochondrion inner membrane. This is an uncharacterized protein from Schizosaccharomyces pombe (strain 972 / ATCC 24843) (Fission yeast).